A 292-amino-acid chain; its full sequence is Ribosomal protein L11 methyltransferase (292 aa).

Residues T144, G165, D187, and N229 each coordinate S-adenosyl-L-methionine.

The protein belongs to the methyltransferase superfamily. PrmA family.

It is found in the cytoplasm. The enzyme catalyses L-lysyl-[protein] + 3 S-adenosyl-L-methionine = N(6),N(6),N(6)-trimethyl-L-lysyl-[protein] + 3 S-adenosyl-L-homocysteine + 3 H(+). Methylates ribosomal protein L11. In Pseudomonas putida (strain W619), this protein is Ribosomal protein L11 methyltransferase.